The chain runs to 337 residues: Large ribosomal subunit protein uL3 (337 aa).

This sequence belongs to the universal ribosomal protein uL3 family. Part of the 50S ribosomal subunit. Forms a cluster with proteins L14 and L24e.

One of the primary rRNA binding proteins, it binds directly near the 3'-end of the 23S rRNA, where it nucleates assembly of the 50S subunit. The chain is Large ribosomal subunit protein uL3 from Methanospirillum hungatei JF-1 (strain ATCC 27890 / DSM 864 / NBRC 100397 / JF-1).